Here is a 156-residue protein sequence, read N- to C-terminus: Cyanate hydratase (156 aa).

Active-site residues include R96, E99, and S122.

Belongs to the cyanase family.

The enzyme catalyses cyanate + hydrogencarbonate + 3 H(+) = NH4(+) + 2 CO2. Its function is as follows. Catalyzes the reaction of cyanate with bicarbonate to produce ammonia and carbon dioxide. The polypeptide is Cyanate hydratase (Pseudomonas putida (strain W619)).